Here is a 306-residue protein sequence, read N- to C-terminus: Ribonuclease Z (306 aa).

7 residues coordinate Zn(2+): histidine 63, histidine 65, aspartate 67, histidine 68, histidine 141, aspartate 211, and histidine 269. The Proton acceptor role is filled by aspartate 67.

The protein belongs to the RNase Z family. As to quaternary structure, homodimer. The cofactor is Zn(2+).

It carries out the reaction Endonucleolytic cleavage of RNA, removing extra 3' nucleotides from tRNA precursor, generating 3' termini of tRNAs. A 3'-hydroxy group is left at the tRNA terminus and a 5'-phosphoryl group is left at the trailer molecule.. Its function is as follows. Zinc phosphodiesterase, which displays some tRNA 3'-processing endonuclease activity. Probably involved in tRNA maturation, by removing a 3'-trailer from precursor tRNA. The protein is Ribonuclease Z of Staphylococcus saprophyticus subsp. saprophyticus (strain ATCC 15305 / DSM 20229 / NCIMB 8711 / NCTC 7292 / S-41).